The chain runs to 327 residues: Toluene-4-monooxygenase system, hydroxylase component subunit beta (327 aa).

The protein belongs to the TmoE/XamoE family. As to quaternary structure, the alkene monooxygenase multicomponent enzyme system is composed of an electron transfer component and a monooxygenase component interacting with the effector protein TmoD. The electron transfer component is composed of a ferredoxin reductase (TmoF) and a ferredoxin (TmoC), and the monooxygenase component is formed by a heterohexamer (dimer of heterotrimers) of two alpha subunits (TmoA), two beta subunits (TmoE) and two gamma subunits (TmoB).

The enzyme catalyses toluene + NADH + O2 + H(+) = 4-methylphenol + NAD(+) + H2O. The protein operates within xenobiotic degradation; toluene degradation. With respect to regulation, inhibited by Zn(2+) and Cu(2+). Its function is as follows. Component of the toluene-4-monooxygenase multicomponent enzyme system which catalyzes the O2- and NADH-dependent hydroxylation of toluene to form p-cresol. Also able to convert benzene to phenol, catechol, and 1,2,3-trihydroxybenzene by successive hydroxylations. The chain is Toluene-4-monooxygenase system, hydroxylase component subunit beta from Ectopseudomonas mendocina (Pseudomonas mendocina).